A 187-amino-acid chain; its full sequence is MNYFDNKIDQFATYLQKRNNLDHIQFLQVRLGMQIIVGNFLKILVTYSISIFLSVFLYTLVTHLSYMLIRYNAHGAHAKSSILCYIQSILIFVFVPYFLINIDINFTYLLALSIIGLISVVIYAPAATKKQPIPIKLVKRKKYVSIIMYLLVMILSLIIHPFYAQFMLLGILVESITLLPIFFPKED.

5 helical membrane-spanning segments follow: residues 49–69, 82–102, 106–126, 144–164, and 166–186; these read ISIF…YMLI, ILCY…LINI, FTYL…YAPA, VSII…PFYA, and FMLL…FPKE.

This sequence belongs to the AgrB family.

Its subcellular location is the cell membrane. Essential for the production of a quorum sensing system signal molecule, the autoinducing peptide (AIP). This quorum sensing system is responsible for the regulation of the expression of virulence factor genes. Involved in the proteolytic processing of AgrD, the precursor of AIP. This chain is Accessory gene regulator protein B, found in Staphylococcus aureus (strain bovine RF122 / ET3-1).